The sequence spans 455 residues: Ectonucleoside triphosphate diphosphohydrolase 6 (455 aa).

The Cytoplasmic segment spans residues 1-12 (MRKIPNHGTLRM). Residues 13 to 32 (TKVAYPLGLCVGLFIYVAYI) traverse the membrane as a helical; Signal-anchor for type II membrane protein segment. The Lumenal segment spans residues 33 to 455 (KWHRASAAQA…SLKRQKVPAL (423 aa)). The N-linked (GlcNAc...) asparagine glycan is linked to Asn-192. Glu-196 functions as the Proton acceptor in the catalytic mechanism. Asn-256 carries N-linked (GlcNAc...) asparagine glycosylation. 2 disulfide bridges follow: Cys-297-Cys-327 and Cys-387-Cys-401.

Belongs to the GDA1/CD39 NTPase family. It depends on Ca(2+) as a cofactor. Mg(2+) is required as a cofactor. Might be cleaved at the N-terminus, retained in an intracellular membrane compartment and in addition be released into the extracellular medium. Post-translationally, N-glycosylated. Expressed in heart and brain.

Its subcellular location is the golgi apparatus membrane. It is found in the secreted. It localises to the cell membrane. It catalyses the reaction a ribonucleoside 5'-diphosphate + H2O = a ribonucleoside 5'-phosphate + phosphate + H(+). The catalysed reaction is IDP + H2O = IMP + phosphate + H(+). It carries out the reaction GDP + H2O = GMP + phosphate + H(+). The enzyme catalyses UDP + H2O = UMP + phosphate + H(+). Functionally, catalyzes the hydrolysis of nucleoside triphosphates and diphosphates in a calcium- or magnesium-dependent manner. Has a strong preference for nucleoside diphosphates, preferentially hydrolyzes GDP, IDP, and UDP, with slower hydrolysis of CDP, ITP, GTP, CTP, ADP, and UTP and virtually no hydrolysis of ATP. The membrane bound form might support glycosylation reactions in the Golgi apparatus and, when released from cells, might catalyze the hydrolysis of extracellular nucleotides. The polypeptide is Ectonucleoside triphosphate diphosphohydrolase 6 (Entpd6) (Rattus norvegicus (Rat)).